An 820-amino-acid chain; its full sequence is Pentatricopeptide repeat-containing protein At3g22150, chloroplastic (820 aa).

Positions 1 to 42 are disordered; sequence MAGSALPLPPPPPLSLQSPSQNQTRHSSTFSPPTLTPQTPSI. The transit peptide at 1–50 directs the protein to the chloroplast; it reads MAGSALPLPPPPPLSLQSPSQNQTRHSSTFSPPTLTPQTPSIRSRLSKIC. Polar residues predominate over residues 22 to 42; sequence NQTRHSSTFSPPTLTPQTPSI. 17 PPR repeats span residues 69 to 99, 106 to 136, 141 to 177, 178 to 212, 213 to 247, 250 to 284, 285 to 316, 317 to 347, 352 to 382, 383 to 417, 418 to 452, 485 to 519, 520 to 550, 555 to 585, 586 to 620, 621 to 651, and 657 to 691; these read TTVLWNTIIIGFICNNLPHEALLFYSRMKKT, DAYTYSSTLKACAETKNLKAGKAVHCHLIRC, SRVVHNSLMNMYVSCLNAPDCFEYDVVRKVFDNMRRK, NVVAWNTLISWYVKTGRNAEACRQFGIMMRMEVKP, SPVSFVNVFPAVSISRSIKKANVFYGLMLKLGDEY, DLFVVSSAISMYAELGDIESSRRVFDSCVERNIEV, WNTMIGVYVQNDCLVESIELFLEAIGSKEIVS, DEVTYLLAASAVSALQQVELGRQFHGFVSKN, PIVIVNSLMVMYSRCGSVHKSFGVFLSMRER, DVVSWNTMISAFVQNGLDDEGLMLVYEMQKQGFKI, DYITVTALLSAASNLRNKEIGKQTHAFLIRQGIQF, DQATWNSMISGYTQNGHTEKTFLVFRKMLEQNIRP, NAVTVASILPACSQIGSVDLGKQLHGFSIRQ, NVFVASALVDMYSKAGAIKYAEDMFSQTKER, NSVTYTTMILGYGQHGMGERAISLFLSMQESGIKP, DAITFVAVLSACSYSGLIDEGLKIFEEMREV, and SSEHYCCITDMLGRVGRVNEAYEFVKGLGEEGNIA. Residues 693–770 are type E motif; the sequence is LWGSLLGSCK…EVGRSGIEIA (78 aa). Residues 771–801 are type E(+) motif; that stretch reads GYVNCFVSRDQEHPHSSEIYDVIDGLAKDMR.

Belongs to the PPR family. PCMP-E subfamily.

The protein localises to the plastid. It localises to the chloroplast. The chain is Pentatricopeptide repeat-containing protein At3g22150, chloroplastic (PCMP-E95) from Arabidopsis thaliana (Mouse-ear cress).